The primary structure comprises 101 residues: Urease subunit beta (101 aa).

This sequence belongs to the urease beta subunit family. As to quaternary structure, heterotrimer of UreA (gamma), UreB (beta) and UreC (alpha) subunits. Three heterotrimers associate to form the active enzyme.

The protein localises to the cytoplasm. It catalyses the reaction urea + 2 H2O + H(+) = hydrogencarbonate + 2 NH4(+). The protein operates within nitrogen metabolism; urea degradation; CO(2) and NH(3) from urea (urease route): step 1/1. The chain is Urease subunit beta from Agrobacterium fabrum (strain C58 / ATCC 33970) (Agrobacterium tumefaciens (strain C58)).